The following is a 415-amino-acid chain: Palmitoyl-acyl carrier protein thioesterase, chloroplastic (415 aa).

Low complexity-rich tracts occupy residues 1–16 (MVAT…LPSA) and 24–41 (KLGN…KSTP). Residues 1 to 60 (MVATAASSAFFPLPSADTSSRPGKLGNKPSSLSPLKPKSTPNGGLQVKANASAPPKINGS) constitute a chloroplast transit peptide. The tract at residues 1 to 81 (MVATAASSAF…QEDAHSAPPP (81 aa)) is disordered. Residues asparagine 314, histidine 316, and cysteine 351 contribute to the active site.

The protein belongs to the acyl-ACP thioesterase family.

Its subcellular location is the plastid. It is found in the chloroplast. It catalyses the reaction hexadecanoyl-[ACP] + H2O = hexadecanoate + holo-[ACP] + H(+). In terms of biological role, plays an essential role in chain termination during de novo fatty acid synthesis. High thioesterase activity for palmitoyl-ACP versus other acyl-ACPs. This is Palmitoyl-acyl carrier protein thioesterase, chloroplastic (FATB1) from Cuphea hookeriana (Cigar plant).